The following is a 125-amino-acid chain: Small ribosomal subunit protein uS13 (125 aa).

This sequence belongs to the universal ribosomal protein uS13 family. Part of the 30S ribosomal subunit. Forms a loose heterodimer with protein S19. Forms two bridges to the 50S subunit in the 70S ribosome.

Its function is as follows. Located at the top of the head of the 30S subunit, it contacts several helices of the 16S rRNA. In the 70S ribosome it contacts the 23S rRNA (bridge B1a) and protein L5 of the 50S subunit (bridge B1b), connecting the 2 subunits; these bridges are implicated in subunit movement. Contacts the tRNAs in the A and P-sites. This is Small ribosomal subunit protein uS13 from Gluconacetobacter diazotrophicus (strain ATCC 49037 / DSM 5601 / CCUG 37298 / CIP 103539 / LMG 7603 / PAl5).